We begin with the raw amino-acid sequence, 95 residues long: MSVSKKDVEYVAELARLEFKEEEKDSFVNDLNKILNYMEKLDELNTDDVDIVVNPYYIENKYREDNVEKSMELKEVIDNAPESLEEYVIVPKVID.

The protein belongs to the GatC family. In terms of assembly, heterotrimer of A, B and C subunits.

It carries out the reaction L-glutamyl-tRNA(Gln) + L-glutamine + ATP + H2O = L-glutaminyl-tRNA(Gln) + L-glutamate + ADP + phosphate + H(+). The catalysed reaction is L-aspartyl-tRNA(Asn) + L-glutamine + ATP + H2O = L-asparaginyl-tRNA(Asn) + L-glutamate + ADP + phosphate + 2 H(+). Allows the formation of correctly charged Asn-tRNA(Asn) or Gln-tRNA(Gln) through the transamidation of misacylated Asp-tRNA(Asn) or Glu-tRNA(Gln) in organisms which lack either or both of asparaginyl-tRNA or glutaminyl-tRNA synthetases. The reaction takes place in the presence of glutamine and ATP through an activated phospho-Asp-tRNA(Asn) or phospho-Glu-tRNA(Gln). In Clostridium botulinum (strain ATCC 19397 / Type A), this protein is Aspartyl/glutamyl-tRNA(Asn/Gln) amidotransferase subunit C.